Consider the following 170-residue polypeptide: MSRGQTEGSQAMASSQAAGPGPSPDAIVSVSGTVQKYVAKKKKVLNPEEAELYELTQAAGIVIDQEVFKILVDLLKMNVAPLAVFQMLKSMCAGHRIADTVSADSSSISLAPGHSDVRGRNKPNPTTSTTQGPGERSSREGSSQRIPRQPSGSRMQKSSSSGKSSGGSST.

Disordered stretches follow at residues 1 to 26 (MSRG…SPDA) and 102 to 170 (SADS…GSST). The segment covering 8-20 (GSQAMASSQAAGP) has biased composition (low complexity). Residues 123-132 (PNPTTSTTQG) are compositionally biased toward polar residues. Residues 151-170 (SGSRMQKSSSSGKSSGGSST) show a composition bias toward low complexity.

The protein belongs to the MOZART2 family. As to quaternary structure, part of the gamma-tubulin complex. Interacts with TUBG1.

The protein resides in the cytoplasm. It localises to the cytoskeleton. It is found in the microtubule organizing center. Its subcellular location is the centrosome. The protein localises to the spindle. The chain is Mitotic-spindle organizing protein 2B (mzt2b) from Xenopus tropicalis (Western clawed frog).